The chain runs to 421 residues: ATP-dependent RNA helicase RhlB (421 aa).

Positions 9–37 (QKFSDFALHPKVVEALEKKGFHNCTPIQA) match the Q motif motif. Residues 40 to 219 (LPLTLAGRDV…FEQMNNAEYI (180 aa)) enclose the Helicase ATP-binding domain. 53-60 (AQTGTGKT) is an ATP binding site. Residues 165–168 (DEAD) carry the DEAD box motif. The Helicase C-terminal domain maps to 245–390 (RLLQTLIEEE…VSKYNPDALM (146 aa)). A disordered region spans residues 392–421 (DLPKPLRLTRPRTGNGPRRTGAPRNRRRSG). A compositionally biased stretch (low complexity) spans 402–414 (PRTGNGPRRTGAP).

The protein belongs to the DEAD box helicase family. RhlB subfamily. Component of the RNA degradosome, which is a multiprotein complex involved in RNA processing and mRNA degradation.

The protein resides in the cytoplasm. It catalyses the reaction ATP + H2O = ADP + phosphate + H(+). DEAD-box RNA helicase involved in RNA degradation. Has RNA-dependent ATPase activity and unwinds double-stranded RNA. This is ATP-dependent RNA helicase RhlB from Escherichia coli O139:H28 (strain E24377A / ETEC).